Here is a 115-residue protein sequence, read N- to C-terminus: Photosystem II reaction center Psb28 protein (115 aa).

The protein belongs to the Psb28 family. In terms of assembly, part of the photosystem II complex.

The protein resides in the plastid. It localises to the chloroplast thylakoid membrane. This chain is Photosystem II reaction center Psb28 protein, found in Pyropia yezoensis (Susabi-nori).